The chain runs to 609 residues: NADH-ubiquinone oxidoreductase chain 5 (609 aa).

Transmembrane regions (helical) follow at residues 6-26 (SSILMILILLTTPIIISMTNL), 35-55 (YATSSIKFSFLLSLLPLLLFF), 84-104 (YFSILFLSVALFVTWSIMQFS), 116-138 (RFIKYLMMFLITMLILTSANNLF), 140-160 (LFIGWEGVGIMSFLLIGWWYG), 171-191 (AILYNRVGDIGFILAMTWFCL), 240-260 (TPVSALLHSSTMVVAGIFLMI), 272-292 (IMTAMLCLGAITTLFTAICAL), 300-319 (IVAFSTSSQLGLMMVTLGIN), 330-350 (THAFFKAMLFMCSGSIIHSLN), 365-385 (MPFTSSCLIIGSLALTGMPFL), 409-429 (MITLIATSMTAVYSMRIIYFV), 456-476 (LALGSILAGFLISLNIPPTNI), 481-501 (MPWHLKMTALLITILGFAIAL), and 581-601 (GLIKLYFLSFLITISLIFILH).

It belongs to the complex I subunit 5 family. Core subunit of respiratory chain NADH dehydrogenase (Complex I) which is composed of 45 different subunits.

The protein localises to the mitochondrion inner membrane. It carries out the reaction a ubiquinone + NADH + 5 H(+)(in) = a ubiquinol + NAD(+) + 4 H(+)(out). Core subunit of the mitochondrial membrane respiratory chain NADH dehydrogenase (Complex I) which catalyzes electron transfer from NADH through the respiratory chain, using ubiquinone as an electron acceptor. Essential for the catalytic activity and assembly of complex I. The sequence is that of NADH-ubiquinone oxidoreductase chain 5 from Rattus norvegicus (Rat).